The chain runs to 172 residues: Protein-export protein SecB (172 aa).

This sequence belongs to the SecB family. In terms of assembly, homotetramer, a dimer of dimers. One homotetramer interacts with 1 SecA dimer.

The protein resides in the cytoplasm. In terms of biological role, one of the proteins required for the normal export of preproteins out of the cell cytoplasm. It is a molecular chaperone that binds to a subset of precursor proteins, maintaining them in a translocation-competent state. It also specifically binds to its receptor SecA. The chain is Protein-export protein SecB from Xylella fastidiosa (strain Temecula1 / ATCC 700964).